Consider the following 540-residue polypeptide: 2,3-bisphosphoglycerate-independent phosphoglycerate mutase (540 aa).

2 residues coordinate Mn(2+): Asp13 and Ser63. The active-site Phosphoserine intermediate is the Ser63. Residues His124, 154–155 (RD), Arg186, Arg192, 262–265 (RPDR), and Lys356 each bind substrate. Positions 423, 427, 464, 465, and 483 each coordinate Mn(2+).

It belongs to the BPG-independent phosphoglycerate mutase family. Monomer. Mn(2+) serves as cofactor.

The catalysed reaction is (2R)-2-phosphoglycerate = (2R)-3-phosphoglycerate. It participates in carbohydrate degradation; glycolysis; pyruvate from D-glyceraldehyde 3-phosphate: step 3/5. Its function is as follows. Catalyzes the interconversion of 2-phosphoglycerate and 3-phosphoglycerate. The polypeptide is 2,3-bisphosphoglycerate-independent phosphoglycerate mutase (Chloroflexus aggregans (strain MD-66 / DSM 9485)).